A 556-amino-acid polypeptide reads, in one-letter code: 2-succinyl-5-enolpyruvyl-6-hydroxy-3-cyclohexene-1-carboxylate synthase (556 aa).

Belongs to the TPP enzyme family. MenD subfamily. As to quaternary structure, homodimer. Mg(2+) serves as cofactor. It depends on Mn(2+) as a cofactor. The cofactor is thiamine diphosphate.

It catalyses the reaction isochorismate + 2-oxoglutarate + H(+) = 5-enolpyruvoyl-6-hydroxy-2-succinyl-cyclohex-3-ene-1-carboxylate + CO2. It participates in quinol/quinone metabolism; 1,4-dihydroxy-2-naphthoate biosynthesis; 1,4-dihydroxy-2-naphthoate from chorismate: step 2/7. Its pathway is quinol/quinone metabolism; menaquinone biosynthesis. Functionally, catalyzes the thiamine diphosphate-dependent decarboxylation of 2-oxoglutarate and the subsequent addition of the resulting succinic semialdehyde-thiamine pyrophosphate anion to isochorismate to yield 2-succinyl-5-enolpyruvyl-6-hydroxy-3-cyclohexene-1-carboxylate (SEPHCHC). This is 2-succinyl-5-enolpyruvyl-6-hydroxy-3-cyclohexene-1-carboxylate synthase from Staphylococcus haemolyticus (strain JCSC1435).